Reading from the N-terminus, the 218-residue chain is Non-structural protein NS3 (218 aa).

It belongs to the orbivirus NS3 family.

In terms of biological role, may play a role in the release of virions from infected cells. This is Non-structural protein NS3 (Segment-10) from Camelus dromedarius (Dromedary).